Consider the following 294-residue polypeptide: Beta-lactamase (294 aa).

The signal sequence occupies residues 1–27 (MFKKRGRQTVLIAAVLAFFTASSPLLA). Ser-76 functions as the Acyl-ester intermediate in the catalytic mechanism. The active-site Proton acceptor is Glu-174. 240-242 (KTG) is a substrate binding site.

It belongs to the class-A beta-lactamase family.

It catalyses the reaction a beta-lactam + H2O = a substituted beta-amino acid. The sequence is that of Beta-lactamase from Citrobacter koseri (Citrobacter diversus).